The chain runs to 629 residues: tRNA uridine 5-carboxymethylaminomethyl modification enzyme MnmG (629 aa).

Residues 13-18, valine 125, and serine 180 each bind FAD; that span reads GGGHAG. 273–287 contributes to the NAD(+) binding site; that stretch reads GPRYCPSIEDKVMRF. Residue glutamine 370 participates in FAD binding.

This sequence belongs to the MnmG family. In terms of assembly, homodimer. Heterotetramer of two MnmE and two MnmG subunits. The cofactor is FAD.

Its subcellular location is the cytoplasm. In terms of biological role, NAD-binding protein involved in the addition of a carboxymethylaminomethyl (cmnm) group at the wobble position (U34) of certain tRNAs, forming tRNA-cmnm(5)s(2)U34. In Salmonella typhi, this protein is tRNA uridine 5-carboxymethylaminomethyl modification enzyme MnmG.